The sequence spans 88 residues: MDSSVPGGQRTLQKRRNAQLQKEKKANQTPASPRQAGFGGSSSSILKLYTDEANGLRVDPLVVLFLAVAFVFSVVALHVVAKVSGKIF.

The disordered stretch occupies residues Met-1–Ser-41. Topologically, residues Met-1–Pro-60 are cytoplasmic. Residues Leu-61 to Ala-81 form a helical membrane-spanning segment.

The protein belongs to the SEC61-beta family. Heterotrimeric complex composed of SEC61, SEB1 and SSS1.

It is found in the endoplasmic reticulum membrane. Necessary for protein translocation in the endoplasmic reticulum. This is Protein transport protein Sec61 subunit beta (SBH1) from Kluyveromyces lactis (strain ATCC 8585 / CBS 2359 / DSM 70799 / NBRC 1267 / NRRL Y-1140 / WM37) (Yeast).